The primary structure comprises 238 residues: 1-(5-phosphoribosyl)-5-[(5-phosphoribosylamino)methylideneamino] imidazole-4-carboxamide isomerase (238 aa).

The active-site Proton acceptor is the Asp8. The Proton donor role is filled by Asp130.

Belongs to the HisA/HisF family.

Its subcellular location is the cytoplasm. The enzyme catalyses 1-(5-phospho-beta-D-ribosyl)-5-[(5-phospho-beta-D-ribosylamino)methylideneamino]imidazole-4-carboxamide = 5-[(5-phospho-1-deoxy-D-ribulos-1-ylimino)methylamino]-1-(5-phospho-beta-D-ribosyl)imidazole-4-carboxamide. It participates in amino-acid biosynthesis; L-histidine biosynthesis; L-histidine from 5-phospho-alpha-D-ribose 1-diphosphate: step 4/9. The sequence is that of 1-(5-phosphoribosyl)-5-[(5-phosphoribosylamino)methylideneamino] imidazole-4-carboxamide isomerase from Methanococcus vannielii (strain ATCC 35089 / DSM 1224 / JCM 13029 / OCM 148 / SB).